The chain runs to 341 residues: Uroporphyrinogen decarboxylase (341 aa).

Residues 23–27, Asp73, Tyr147, Ser202, and His318 contribute to the substrate site; that span reads RQAGR.

Belongs to the uroporphyrinogen decarboxylase family. In terms of assembly, homodimer.

It localises to the cytoplasm. The enzyme catalyses uroporphyrinogen III + 4 H(+) = coproporphyrinogen III + 4 CO2. It functions in the pathway porphyrin-containing compound metabolism; protoporphyrin-IX biosynthesis; coproporphyrinogen-III from 5-aminolevulinate: step 4/4. In terms of biological role, catalyzes the decarboxylation of four acetate groups of uroporphyrinogen-III to yield coproporphyrinogen-III. The chain is Uroporphyrinogen decarboxylase from Novosphingobium aromaticivorans (strain ATCC 700278 / DSM 12444 / CCUG 56034 / CIP 105152 / NBRC 16084 / F199).